The primary structure comprises 877 residues: GPI ethanolamine phosphate transferase 2 (877 aa).

2 N-linked (GlcNAc...) asparagine glycosylation sites follow: N190 and N368. The next 5 helical transmembrane spans lie at 409 to 429, 443 to 463, 464 to 484, 528 to 548, and 570 to 590; these read VDIY…FGLF, YNWY…ASSL, IEEE…ALYF, VDLL…LIYS, and DFGS…SFSF. N611 carries N-linked (GlcNAc...) asparagine glycosylation. A run of 6 helical transmembrane segments spans residues 634–654, 683–703, 716–736, 758–778, 817–837, and 854–876; these read IHLS…RIVL, EIVP…KLLA, LMII…FSMG, VFLV…FWSL, LAGF…CFNL, and FASW…ILAL.

The protein belongs to the PIGG/PIGN/PIGO family. PIGG subfamily.

The protein resides in the endoplasmic reticulum membrane. It participates in glycolipid biosynthesis; glycosylphosphatidylinositol-anchor biosynthesis. Functionally, ethanolamine phosphate transferase involved in glycosylphosphatidylinositol-anchor biosynthesis. Transfers ethanolamine phosphate to the GPI second mannose. In Debaryomyces hansenii (strain ATCC 36239 / CBS 767 / BCRC 21394 / JCM 1990 / NBRC 0083 / IGC 2968) (Yeast), this protein is GPI ethanolamine phosphate transferase 2 (LAS21).